A 461-amino-acid chain; its full sequence is UDP-glucose 6-dehydrogenase TuaD (461 aa).

NAD(+)-binding positions include 3–20, Val-12, Asp-31, Lys-36, Thr-122, and Glu-156; that span reads KIAVIGTGYVGLVSGTCF. Substrate-binding positions include 152 to 156, Lys-205, Asn-209, 250 to 254, and Gly-258; these read EFLRE and FLKAG. Cys-261 functions as the Nucleophile in the catalytic mechanism. An NAD(+)-binding site is contributed by Lys-264. Residue Lys-321 participates in substrate binding. Arg-328 serves as a coordination point for NAD(+).

This sequence belongs to the UDP-glucose/GDP-mannose dehydrogenase family. In terms of processing, phosphorylated by YwqD and dephosphorylated by YwqE in vitro.

The protein localises to the cytoplasm. The catalysed reaction is UDP-alpha-D-glucose + 2 NAD(+) + H2O = UDP-alpha-D-glucuronate + 2 NADH + 3 H(+). Its pathway is nucleotide-sugar biosynthesis; UDP-alpha-D-glucuronate biosynthesis; UDP-alpha-D-glucuronate from UDP-alpha-D-glucose: step 1/1. Its activity is regulated as follows. Activated by phosphorylation; inhibited by dephosphorylation. Its function is as follows. Catalyzes the conversion of UDP-glucose into UDP-glucuronate, one of the precursors of teichuronic acid. This Bacillus subtilis (strain 168) protein is UDP-glucose 6-dehydrogenase TuaD (tuaD).